We begin with the raw amino-acid sequence, 281 residues long: Apolipoprotein Eb (281 aa).

The first 18 residues, 1–18 (MRSLVVFFALAVLTGCQA), serve as a signal peptide directing secretion. The propeptide occupies 19 to 24 (RSLFQA). A 3 X approximate tandem repeats region spans residues 34–66 (MVDRFWQYVSELNTQTDGMVQNIKGSQLSRELD). Tandem repeats lie at residues 67-88 (TLITDTMAELSSYSENLQTQMT), 89-110 (PYASDAAGQLSKDLQLLAGKLQ), 111-132 (TDMTDAKERSTQYLQELKTMME), 133-154 (QNADDVKNRVGTYTRKLKKRLN), 155-176 (KDTEEIRNTVATYMSEMQSRAS), 177-199 (QNADAVKDRFQPYMSQAQDGATQ), 200-227 (KLGAISELMKAQAQEVSEQLEVQAGALK), 228-249 (EKLEETAENLRTSLEGRVDELT), and 254-281 (PYSQKIREQLQEVMDKIKEATAALPTQA). A 9 X 22 AA approximate tandem repeats region spans residues 67–281 (TLITDTMAEL…EATAALPTQA (215 aa)).

Belongs to the apolipoprotein A1/A4/E family. In terms of assembly, homotetramer.

Its subcellular location is the secreted. The protein localises to the extracellular space. It is found in the extracellular matrix. In terms of biological role, APOE is an apolipoprotein, a protein associating with lipid particles, that mainly functions in lipoprotein-mediated lipid transport between organs via the plasma and interstitial fluids. APOE is a core component of plasma lipoproteins and is involved in their production, conversion and clearance. Apolipoproteins are amphipathic molecules that interact both with lipids of the lipoprotein particle core and the aqueous environment of the plasma. This chain is Apolipoprotein Eb (apoeb), found in Danio rerio (Zebrafish).